We begin with the raw amino-acid sequence, 332 residues long: Holliday junction branch migration complex subunit RuvB (332 aa).

Positions 1 to 181 (MARILDNDVM…FGITGHMEYY (181 aa)) are large ATPase domain (RuvB-L). ATP contacts are provided by residues Leu-20, Arg-21, Gly-62, Lys-65, Thr-66, Thr-67, 128–130 (EDF), Arg-171, Tyr-181, and Arg-218. Thr-66 contributes to the Mg(2+) binding site. Positions 182–252 (QEKDLTEIVE…ITDRALTMLD (71 aa)) are small ATPAse domain (RuvB-S). Residues 255-332 (REGLDYIDQK…RHLGYPYQNT (78 aa)) form a head domain (RuvB-H) region. Positions 291, 310, 312, and 315 each coordinate DNA.

Belongs to the RuvB family. As to quaternary structure, homohexamer. Forms an RuvA(8)-RuvB(12)-Holliday junction (HJ) complex. HJ DNA is sandwiched between 2 RuvA tetramers; dsDNA enters through RuvA and exits via RuvB. An RuvB hexamer assembles on each DNA strand where it exits the tetramer. Each RuvB hexamer is contacted by two RuvA subunits (via domain III) on 2 adjacent RuvB subunits; this complex drives branch migration. In the full resolvosome a probable DNA-RuvA(4)-RuvB(12)-RuvC(2) complex forms which resolves the HJ.

Its subcellular location is the cytoplasm. The catalysed reaction is ATP + H2O = ADP + phosphate + H(+). The RuvA-RuvB-RuvC complex processes Holliday junction (HJ) DNA during genetic recombination and DNA repair, while the RuvA-RuvB complex plays an important role in the rescue of blocked DNA replication forks via replication fork reversal (RFR). RuvA specifically binds to HJ cruciform DNA, conferring on it an open structure. The RuvB hexamer acts as an ATP-dependent pump, pulling dsDNA into and through the RuvAB complex. RuvB forms 2 homohexamers on either side of HJ DNA bound by 1 or 2 RuvA tetramers; 4 subunits per hexamer contact DNA at a time. Coordinated motions by a converter formed by DNA-disengaged RuvB subunits stimulates ATP hydrolysis and nucleotide exchange. Immobilization of the converter enables RuvB to convert the ATP-contained energy into a lever motion, pulling 2 nucleotides of DNA out of the RuvA tetramer per ATP hydrolyzed, thus driving DNA branch migration. The RuvB motors rotate together with the DNA substrate, which together with the progressing nucleotide cycle form the mechanistic basis for DNA recombination by continuous HJ branch migration. Branch migration allows RuvC to scan DNA until it finds its consensus sequence, where it cleaves and resolves cruciform DNA. The polypeptide is Holliday junction branch migration complex subunit RuvB (Streptococcus pyogenes serotype M12 (strain MGAS9429)).